Reading from the N-terminus, the 571-residue chain is Acetolactate synthase large subunit (571 aa).

E51 is a binding site for thiamine diphosphate. FAD contacts are provided by residues R153, 261–282 (HGTY…IGVR), and 304–323 (DIDP…IVGD). Positions 394-474 (QHQMFTALYY…VLILNLNNSS (81 aa)) are thiamine pyrophosphate binding. D445 and N472 together coordinate Mg(2+).

The protein belongs to the TPP enzyme family. Dimer of large and small chains. It depends on Mg(2+) as a cofactor. Thiamine diphosphate serves as cofactor.

The catalysed reaction is 2 pyruvate + H(+) = (2S)-2-acetolactate + CO2. The protein operates within amino-acid biosynthesis; L-isoleucine biosynthesis; L-isoleucine from 2-oxobutanoate: step 1/4. It participates in amino-acid biosynthesis; L-valine biosynthesis; L-valine from pyruvate: step 1/4. The protein is Acetolactate synthase large subunit (ilvI) of Buchnera aphidicola subsp. Schizaphis graminum (strain Sg).